The primary structure comprises 154 residues: Putative hydrogenase maturation protease MJ0253 (154 aa).

It belongs to the peptidase A31 family.

This chain is Putative hydrogenase maturation protease MJ0253, found in Methanocaldococcus jannaschii (strain ATCC 43067 / DSM 2661 / JAL-1 / JCM 10045 / NBRC 100440) (Methanococcus jannaschii).